Here is a 416-residue protein sequence, read N- to C-terminus: Inositol phosphate phosphatase SopB (416 aa).

Residue Cys315 is part of the active site. Residues 315–321 carry the CX5R motif motif; it reads CKSGKDR.

This sequence belongs to the phosphatase IpgD/SopB family.

The protein localises to the secreted. Its function is as follows. Converts phosphatidylinositol 3,4,5-trisphosphate (PtdIns 3,4,5-P3) to PtdIns 3-P and prevents the transition of PtdIns 3-P to PtdIns 3,5-P2. It is one of the known effectors injected by Salmonella into the host cell and is required for invasion and for an efficient generation and maintenance of Salmonella-containing vacuole (SVC). Alteration of the phosphoinositide composition of the plasma membrane causes membrane ruffling and actin cytoskeleton rearrangements. The persistence of PtdIns 3-P diverts the SCV from the endocytic pathway resulting in enlarged vesicles, which are essential to create a favorable environment where Salmonella can replicate and avoid immune defenses of the host cell. The protein is Inositol phosphate phosphatase SopB (sopB) of Salmonella bongori.